The sequence spans 982 residues: Protein cramped (982 aa).

Disordered stretches follow at residues 1–37 (MEELSKQPPPPPLTQPPPPSSSVSIEEPLPNGKGGGA), 71–111 (QKMK…GSGK), 323–349 (SLPSAASNNNNNNNETEPLQPSVASLD), 407–456 (NKRL…SSGD), and 822–851 (GTSSAGISTSGSKPDCSMNAMTASQDQEPG). Residues 7–20 (QPPPPPLTQPPPPS) are compositionally biased toward pro residues. Residues 21–30 (SSVSIEEPLP) show a composition bias toward low complexity. Basic and acidic residues predominate over residues 86 to 98 (SEREPNKKEEKAA). The span at 100 to 111 (KTPSQLKTGSGK) shows a compositional bias: polar residues. An SANT domain is found at 109 to 173 (SGKTTWTNVE…HYYQTHHKIC (65 aa)). A compositionally biased stretch (basic and acidic residues) spans 410–425 (LRTESGSEKRSPETKK). Residues S431 and S437 each carry the phosphoserine modification. The segment covering 822 to 833 (GTSSAGISTSGS) has biased composition (low complexity).

The protein belongs to the cramped family. Ubiquitously expressed throughout embryonic development. High expression is detected in CNS and gonads.

The protein resides in the nucleus. Its function is as follows. Polycomb group (Pc-G) genes are needed to maintain expression patterns of the homeotic selector genes of the Antennapedia (Antp-C) and Bithorax (Bx-C) complexes, and hence for the maintenance of segmental determination. Can act as a modifier of position effect variegation (PEV). The protein is Protein cramped (crm) of Drosophila melanogaster (Fruit fly).